A 182-amino-acid polypeptide reads, in one-letter code: Crossover junction endodeoxyribonuclease RuvC (182 aa).

Catalysis depends on residues Asp7, Glu67, and Asp139. The Mg(2+) site is built by Asp7, Glu67, and Asp139.

This sequence belongs to the RuvC family. Homodimer which binds Holliday junction (HJ) DNA. The HJ becomes 2-fold symmetrical on binding to RuvC with unstacked arms; it has a different conformation from HJ DNA in complex with RuvA. In the full resolvosome a probable DNA-RuvA(4)-RuvB(12)-RuvC(2) complex forms which resolves the HJ. Requires Mg(2+) as cofactor.

Its subcellular location is the cytoplasm. The enzyme catalyses Endonucleolytic cleavage at a junction such as a reciprocal single-stranded crossover between two homologous DNA duplexes (Holliday junction).. Its function is as follows. The RuvA-RuvB-RuvC complex processes Holliday junction (HJ) DNA during genetic recombination and DNA repair. Endonuclease that resolves HJ intermediates. Cleaves cruciform DNA by making single-stranded nicks across the HJ at symmetrical positions within the homologous arms, yielding a 5'-phosphate and a 3'-hydroxyl group; requires a central core of homology in the junction. The consensus cleavage sequence is 5'-(A/T)TT(C/G)-3'. Cleavage occurs on the 3'-side of the TT dinucleotide at the point of strand exchange. HJ branch migration catalyzed by RuvA-RuvB allows RuvC to scan DNA until it finds its consensus sequence, where it cleaves and resolves the cruciform DNA. The sequence is that of Crossover junction endodeoxyribonuclease RuvC from Bordetella petrii (strain ATCC BAA-461 / DSM 12804 / CCUG 43448).